A 338-amino-acid polypeptide reads, in one-letter code: Transcription factor MYB76 (338 aa).

2 HTH myb-type domains span residues 9 to 65 (GEGL…KPDI) and 66 to 116 (KRGE…KKRL). 2 consecutive DNA-binding regions (H-T-H motif) follow at residues 37-61 (WRDI…TNYL) and 89-112 (WSVI…NTHL). 2 disordered regions span residues 123-171 (PVTH…SSNL) and 176-195 (SKIS…CKKR). The span at 140-154 (MKFDFQKKSNQDEHS) shows a compositional bias: basic and acidic residues. Residues 155 to 171 (SQSSSTTPASLPLSSNL) are compositionally biased toward low complexity.

As to quaternary structure, can form complexes with MYC2, MYC3 or MYC4. Expressed in both vegetative and generative organs. Mostly present in inflorescences, flowers and seedlings, in the transition zone between roots and the foliar part, and stems, and, to a lower extent, in leaves (in midvein and trichomes).

The protein resides in the nucleus. In terms of biological role, plays a role in determining the spatial distribution of aliphatic glucosinolates (AGLSs) within the leaf, mostly short chained. Together with MYB28/HAG1 and MYB29/HAG3, promotes aliphatic glucosinolate biosynthesis and represses indolic glucosinolate biosynthesis, but could not activate AGSL biosynthesis on its own. This is Transcription factor MYB76 (MYB76) from Arabidopsis thaliana (Mouse-ear cress).